Reading from the N-terminus, the 557-residue chain is CTP synthase (557 aa).

Residues 1 to 267 (MAKYIFVTGG…GAYLTQRLGL (267 aa)) form an amidoligase domain region. S13 lines the CTP pocket. S13 lines the UTP pocket. Position 14–19 (14–19 (SVGKGI)) interacts with ATP. Position 54 (Y54) interacts with L-glutamine. D71 provides a ligand contact to ATP. Mg(2+) is bound by residues D71 and E141. CTP is bound by residues 148–150 (DIE), 188–193 (KTKPTQ), and K224. Residues 188–193 (KTKPTQ) and K224 each bind UTP. Positions 292-535 (AIALVGKYVE…VAAAAKTFRE (244 aa)) constitute a Glutamine amidotransferase type-1 domain. G354 serves as a coordination point for L-glutamine. C381 functions as the Nucleophile; for glutamine hydrolysis in the catalytic mechanism. L-glutamine is bound by residues 382-385 (LGMQ), E406, and R463. Residues H508 and E510 contribute to the active site. Residues 536–557 (GDQRPLPLEQNGAVTEHEPHSR) are disordered.

It belongs to the CTP synthase family. In terms of assembly, homotetramer.

It carries out the reaction UTP + L-glutamine + ATP + H2O = CTP + L-glutamate + ADP + phosphate + 2 H(+). It catalyses the reaction L-glutamine + H2O = L-glutamate + NH4(+). The enzyme catalyses UTP + NH4(+) + ATP = CTP + ADP + phosphate + 2 H(+). It participates in pyrimidine metabolism; CTP biosynthesis via de novo pathway; CTP from UDP: step 2/2. With respect to regulation, allosterically activated by GTP, when glutamine is the substrate; GTP has no effect on the reaction when ammonia is the substrate. The allosteric effector GTP functions by stabilizing the protein conformation that binds the tetrahedral intermediate(s) formed during glutamine hydrolysis. Inhibited by the product CTP, via allosteric rather than competitive inhibition. Its function is as follows. Catalyzes the ATP-dependent amination of UTP to CTP with either L-glutamine or ammonia as the source of nitrogen. Regulates intracellular CTP levels through interactions with the four ribonucleotide triphosphates. In Roseiflexus sp. (strain RS-1), this protein is CTP synthase.